A 185-amino-acid polypeptide reads, in one-letter code: Ribosome-recycling factor (185 aa).

Belongs to the RRF family.

Its subcellular location is the cytoplasm. Its function is as follows. Responsible for the release of ribosomes from messenger RNA at the termination of protein biosynthesis. May increase the efficiency of translation by recycling ribosomes from one round of translation to another. This chain is Ribosome-recycling factor, found in Bacillus anthracis (strain A0248).